A 145-amino-acid chain; its full sequence is Bacilliredoxin BrxB (145 aa).

Residues Cys52 and Cys54 each act as nucleophile in the active site. Residue Cys52 is modified to S-bacillithiol cysteine disulfide. The CXC active site motif signature appears at 52–54 (CGC). Cys52 and Cys54 are disulfide-bonded.

Belongs to the bacilliredoxin family. As to quaternary structure, interacts with BrxC. In terms of processing, N-terminal Cys of the CXC active site motif can react with bacillithiol (BSH) to form mixed disulfides. S-bacillithiolation protects Cys residues against overoxidation by acting as a redox switch in response to oxidative stress.

Its function is as follows. S-bacillithiolation is the formation of mixed disulfide bonds between protein thiols and the general thiol reductant bacillithiol (BSH) under oxidative stress. BSH is an equivalent of glutathione (GSH) in Firmicutes. This protein is a dithiol bacilliredoxin, which debacillithiolates (removes BSH) the S-bacillithiolated OhrR (OhrR-SSB) in vitro and in vivo NaOCl-generated S-bacillithiolated MetE (MetE-SSB). Involved in maintaining redox homeostasis in response to disulfide stress conditions. In Bacillus subtilis (strain 168), this protein is Bacilliredoxin BrxB.